A 163-amino-acid chain; its full sequence is Cyanate hydratase (163 aa).

Catalysis depends on residues Arg103, Glu106, and Ser129.

Belongs to the cyanase family.

The catalysed reaction is cyanate + hydrogencarbonate + 3 H(+) = NH4(+) + 2 CO2. Its function is as follows. Catalyzes the reaction of cyanate with bicarbonate to produce ammonia and carbon dioxide. The sequence is that of Cyanate hydratase from Ajellomyces dermatitidis (strain ER-3 / ATCC MYA-2586) (Blastomyces dermatitidis).